A 1219-amino-acid polypeptide reads, in one-letter code: FK506-binding protein 15 (1219 aa).

Met-1 carries the N-acetylmethionine modification. 2 positions are modified to phosphoserine: Ser-14 and Ser-23. Positions 41–66 (YTAPKQPKKGQGTAATGNQATPKTAP) are disordered. Positions 53–66 (TAATGNQATPKTAP) are enriched in polar residues. The segment at 72 to 169 (PTILVATAVH…AVEFNKQVCI (98 aa)) is important for function in growth cone organization. Lys-92 carries the post-translational modification N6-acetyllysine. Residues 197–290 (GDSLEVAYTG…VFEVEVRRVK (94 aa)) form the PPIase FKBP-type domain. Residues 294-349 (DSGSDGHSVSSRDSAAPSPIPGADNLSADPVVSPPTSIPFKSGEPALRTKSNSLSE) are disordered. Phosphoserine is present on residues Ser-307, Ser-311, Ser-326, Ser-344, Ser-346, and Ser-356. A disordered region spans residues 381-433 (PQLDSNDSEIEDVNTLQGGGQPVVTPSVQPSLHPAHPALPQMTSQAPQPSVTG). Over residues 421-433 (QMTSQAPQPSVTG) the composition is skewed to polar residues. Coiled coils occupy residues 522–789 (AVSK…TDQA), 818–878 (DEHL…GVEA), and 925–951 (TLQL…AEER). Phosphoserine is present on Ser-619. The tract at residues 739 to 761 (LEKNLSERKKKSAQERSQAEEEI) is disordered. Positions 931–1219 (QQEQEKEESS…DDDDDIDWLG (289 aa)) are disordered. Residues Ser-939, Ser-940, Ser-941, and Ser-956 each carry the phosphoserine modification. Positions 957–971 (QEQSASASSGQPQAP) are enriched in low complexity. 6 positions are modified to phosphoserine: Ser-979, Ser-1024, Ser-1056, Ser-1061, Ser-1065, and Ser-1097. Over residues 1090–1100 (QESSTRLSLTS) the composition is skewed to polar residues. Thr-1099 carries the phosphothreonine modification. Position 1114 is a phosphoserine (Ser-1114). The span at 1123–1139 (LKKDDVTSSTGPHKELS) shows a compositional bias: basic and acidic residues. Phosphoserine occurs at positions 1158, 1161, 1162, 1164, and 1195. Residue Thr-1203 is modified to Phosphothreonine. The segment covering 1207 to 1219 (GDDDDDDDIDWLG) has biased composition (acidic residues).

The protein belongs to the FKBP-type PPIase family. As to quaternary structure, interacts with WIP and actin. Interacts with TBC1D23.

Its subcellular location is the cytoplasm. It is found in the cell projection. The protein localises to the axon. It localises to the early endosome. Its function is as follows. May be involved in the cytoskeletal organization of neuronal growth cones. Seems to be inactive as a PPIase. Involved in the transport of early endosomes at the level of transition between microfilament-based and microtubule-based movement. The polypeptide is FK506-binding protein 15 (FKBP15) (Homo sapiens (Human)).